The chain runs to 191 residues: Elongation factor P 1 (191 aa).

This sequence belongs to the elongation factor P family.

The protein localises to the cytoplasm. It functions in the pathway protein biosynthesis; polypeptide chain elongation. Involved in peptide bond synthesis. Stimulates efficient translation and peptide-bond synthesis on native or reconstituted 70S ribosomes in vitro. Probably functions indirectly by altering the affinity of the ribosome for aminoacyl-tRNA, thus increasing their reactivity as acceptors for peptidyl transferase. This Lactobacillus acidophilus (strain ATCC 700396 / NCK56 / N2 / NCFM) protein is Elongation factor P 1.